The primary structure comprises 412 residues: Putative odorant receptor 85d (412 aa).

Residues 1 to 56 (MLTKKDTQSAKEQEKLKAIPLHSFLKYANVFYLSIGMMAYDHKYSQKWKEVLLHWT) are Cytoplasmic-facing. A helical membrane pass occupies residues 57-77 (FIAQMVNLNTVLISELIYVFL). The Extracellular segment spans residues 78-84 (AIGKGSN). A helical membrane pass occupies residues 85-105 (FLEATMNLSFIGFVIVGDFKI). Residues 106-152 (WNISRQRKRLTQVVSRLEELHPQGLAQQEPYNIGHHLSGYSRYSKFY) are Cytoplasmic-facing. Residues 153 to 173 (FGMHMVLIWTYNLYWAVYYLV) traverse the membrane as a helical segment. Over 174 to 219 (CDFWLGMRQFERMLPYYCWVPWDWSTGYSYYFMYISQNIGGQACLS) the chain is Extracellular. Residues 220–240 (GQLAADMLMCALVTLVVMHFI) form a helical membrane-spanning segment. The Cytoplasmic portion of the chain corresponds to 241–282 (RLSAHIESHVAGIGSFQHDLEFLQATVAYHQSLIHLCQDINE). The helical transmembrane segment at 283–303 (IFGVSLLSNFVSSSFIICFVG) threads the bilayer. Residues 304–314 (FQMTIGSKIDN) lie on the Extracellular side of the membrane. A helical membrane pass occupies residues 315-335 (LVMLVLFLFCAMVQVFMIATH). Residues 336-382 (AQRLVDASEQIGQAVYNHDWFRADLRYRKMLILIIKRAQQPSRLKAT) are Cytoplasmic-facing. A helical transmembrane segment spans residues 383 to 403 (MFLNISLVTVSDLLQLSYKFF). Over 404 to 412 (ALLRTMYVN) the chain is Extracellular.

It belongs to the insect chemoreceptor superfamily. Heteromeric odorant receptor channel (TC 1.A.69) family. Or49a subfamily. As to quaternary structure, interacts with Orco. Complexes exist early in the endomembrane system in olfactory sensory neurons (OSNs), coupling these complexes to the conserved ciliary trafficking pathway. As to expression, expressed in olfactory sensory neurons in the maxillary palp.

The protein localises to the cell membrane. In terms of biological role, odorant receptor which mediates acceptance or avoidance behavior, depending on its substrates. The odorant receptor repertoire encodes a large collection of odor stimuli that vary widely in identity, intensity, and duration. May form a complex with Orco to form odorant-sensing units, providing sensitive and prolonged odorant signaling and calcium permeability. The polypeptide is Putative odorant receptor 85d (Or85d) (Drosophila melanogaster (Fruit fly)).